A 231-amino-acid polypeptide reads, in one-letter code: Maleylacetoacetate isomerase maiA (231 aa).

In terms of domain architecture, GST N-terminal spans 7 to 93 (PKVTLYTYFR…YLEEITPASS (87 aa)). One can recognise a GST C-terminal domain in the interval 102–224 (NPEARAVVRT…HWRTQPDTPE (123 aa)).

The protein belongs to the GST superfamily. Zeta family.

The catalysed reaction is 4-maleylacetoacetate = 4-fumarylacetoacetate. It functions in the pathway amino-acid degradation; L-phenylalanine degradation; acetoacetate and fumarate from L-phenylalanine: step 5/6. Its function is as follows. Maleylacetoacetate isomerase; part of the L-tyrosine degradation gene cluster that mediates the biosynthesis of the brownish pigment pyomelanin as an alternative melanin. The 4-hydroxyphenylpyruvate dioxygenase hppD catalyzes the conversion of 4-hydroxyphenylpyruvate to homogentisic acid (HGA). The protein hmgX is crucial for this conversion and thus, probably functions as an accessory factor to mediate specific activity of hppD. The homogentisate 1,2-dioxygenase hmgA is then involved in the cleavage of the aromatic ring of HGA and its conversion to 4-maleylacetoacetate. When hmgA activity is lowered by the cell wall integrity (CWI) signaling pathway, HGA accumulates and leads to the production of pyomelanin through benzoquinone acetic acid after oxidation and polymerization. On the opposite, in non-stress conditions, both hppD and hmgA activities are balanced and HGA is degraded into 4-maleylacetoacetate. 4-maleylacetoacetate is further converted to 4-fumarylacetoacetate by the maleylacetoacetate isomerase maiA, which is degraded into fumarate and acetoacetate by the fumarylacetoacetase fahA. The polypeptide is Maleylacetoacetate isomerase maiA (Aspergillus fumigatus (strain ATCC MYA-4609 / CBS 101355 / FGSC A1100 / Af293) (Neosartorya fumigata)).